We begin with the raw amino-acid sequence, 91 residues long: Large ribosomal subunit protein bL27 (91 aa).

The segment at 1–26 (MAHKKGVGSSRNGRDSNPKMRGVKRF) is disordered.

This sequence belongs to the bacterial ribosomal protein bL27 family.

In Chloroflexus aurantiacus (strain ATCC 29366 / DSM 635 / J-10-fl), this protein is Large ribosomal subunit protein bL27.